We begin with the raw amino-acid sequence, 892 residues long: Alanine--tRNA ligase (892 aa).

Zn(2+) contacts are provided by histidine 596, histidine 600, cysteine 700, and histidine 704.

It belongs to the class-II aminoacyl-tRNA synthetase family. It depends on Zn(2+) as a cofactor.

It localises to the cytoplasm. It catalyses the reaction tRNA(Ala) + L-alanine + ATP = L-alanyl-tRNA(Ala) + AMP + diphosphate. Functionally, catalyzes the attachment of alanine to tRNA(Ala) in a two-step reaction: alanine is first activated by ATP to form Ala-AMP and then transferred to the acceptor end of tRNA(Ala). Also edits incorrectly charged Ser-tRNA(Ala) and Gly-tRNA(Ala) via its editing domain. The protein is Alanine--tRNA ligase of Methanococcus maripaludis (strain C7 / ATCC BAA-1331).